The sequence spans 639 residues: Muscarinic acetylcholine receptor M3 (639 aa).

The Extracellular portion of the chain corresponds to 1-115 (MLTHYQLCFQ…DPLGGHAVWQ (115 aa)). N-linked (GlcNAc...) asparagine glycosylation is found at Asn16, Asn44, Asn45, Asn54, Asn97, and Asn101. The chain crosses the membrane as a helical span at residues 116 to 139 (VVLIAFLTGIIALVTIIGNILVIV). At 140–152 (SFKVNKQLKTVNN) the chain is on the cytoplasmic side. A helical transmembrane segment spans residues 153 to 173 (YFLLSLACADLIIGVISMNLF). Topologically, residues 174–190 (TTYIIMGHWALGNLACD) are extracellular. The cysteines at positions 189 and 269 are disulfide-linked. A helical transmembrane segment spans residues 191 to 212 (LWLSIDYVASNASVMNLLVISF). The Cytoplasmic segment spans residues 213 to 232 (DRYFSITRPLTYRAKRTTKR). A helical transmembrane segment spans residues 233-255 (AGVMIGLAWIISFVLWAPAILFW). Residues 256–277 (QYFVGKRTVPLDECFIQFLSEP) lie on the Extracellular side of the membrane. Residues 278-300 (IITFGTAIAAFYLPVTIMSILYW) form a helical membrane-spanning segment. Residues 301–542 (RIYKETEKRT…LIKEKKAAQT (242 aa)) are Cytoplasmic-facing. 2 disordered regions span residues 370–404 (PNTD…DEED) and 431–471 (LPSS…GGSF). Positions 382-393 (SDSWNNNDAAAS) are enriched in low complexity. Positions 443-454 (ELQKSDTDSQEK) are enriched in basic and acidic residues. Residues 543 to 563 (LSAILFAFIITWTPYNIMVLV) traverse the membrane as a helical segment. The Extracellular portion of the chain corresponds to 564-576 (NTFCDCVPKTVWN). The chain crosses the membrane as a helical span at residues 577–596 (LGYWLCYINSTVNPVCYALC). Residues 597 to 639 (NKMFRNTFKMLLLCQCDKRKRRKQQYQQRQSVIFHKRIPREAS) lie on the Cytoplasmic side of the membrane.

This sequence belongs to the G-protein coupled receptor 1 family. Muscarinic acetylcholine receptor subfamily. CHRM3 sub-subfamily. As to expression, brain, heart atria, and ventricle.

The protein resides in the cell membrane. It is found in the postsynaptic cell membrane. Functionally, the muscarinic acetylcholine receptor mediates various cellular responses, including inhibition of adenylate cyclase, breakdown of phosphoinositides and modulation of potassium channels through the action of G proteins. Primary transducing effect is Pi turnover. This chain is Muscarinic acetylcholine receptor M3 (CHRM3), found in Gallus gallus (Chicken).